Reading from the N-terminus, the 659-residue chain is Forkhead box protein P1-B (659 aa).

Polar residues-rich tracts occupy residues 1–16 (MMQE…TAHQ) and 32–41 (KSTTPSSDIT). Disordered regions lie at residues 1–41 (MMQE…SDIT) and 229–263 (ENSV…NGQY). A C2H2-type zinc finger spans residues 289-314 (GVCKWPGCEAVFEDFQSFLKHLNNEH). The interval 331–352 (VQQLELQLAKDKERLQAMMTHL) is leucine-zipper. Positions 365 to 369 (PLNLV) are CTBP1-binding. A disordered region spans residues 379 to 413 (PAASPPLSLPQTPTTPTAPLTPLSQTHSVITPTSL). Residues 387-404 (LPQTPTTPTAPLTPLSQT) are compositionally biased toward low complexity. Residues 448–538 (RPPFTYASLI…PQKISGSPAL (91 aa)) constitute a DNA-binding region (fork-head). Positions 590-659 (GAMDHGNSNG…EDDHGTEDML (70 aa)) are disordered. Over residues 595–605 (GNSNGSDSSPG) the composition is skewed to polar residues. A compositionally biased stretch (basic and acidic residues) spans 641 to 659 (PDFDHHRDYEDDHGTEDML).

In terms of tissue distribution, shows complex and dynamic expression during early embryonic development. Prominent in many regions of the developing central nervous system, particularly in midbrain-hindbrain boundary, hindbrain and spinal cord. Strongly expressed in the retina, ear, branchial arches, hatching gland, heart, pronephric duct, gut, proctodeum, pectoral fin and swim bladder.

The protein resides in the nucleus. Transcriptional repressor. The chain is Forkhead box protein P1-B (foxp1b) from Danio rerio (Zebrafish).